A 107-amino-acid polypeptide reads, in one-letter code: Holo-[acyl-carrier-protein] synthase (107 aa).

Mg(2+) is bound by residues aspartate 10 and glutamate 54.

The protein belongs to the P-Pant transferase superfamily. AcpS family. Mg(2+) serves as cofactor.

The protein resides in the cytoplasm. The catalysed reaction is apo-[ACP] + CoA = holo-[ACP] + adenosine 3',5'-bisphosphate + H(+). Transfers the 4'-phosphopantetheine moiety from coenzyme A to a Ser of acyl-carrier-protein. In Mycoplasma mobile (strain ATCC 43663 / 163K / NCTC 11711) (Mesomycoplasma mobile), this protein is Holo-[acyl-carrier-protein] synthase.